A 228-amino-acid chain; its full sequence is PKHD-type hydroxylase xcc-b100_1388 (228 aa).

The Fe2OG dioxygenase domain occupies 78-180; it reads RIYPPLFNRY…RVASFFWIQS (103 aa). Positions 96, 98, and 161 each coordinate Fe cation. Arg-171 serves as a coordination point for 2-oxoglutarate.

It depends on Fe(2+) as a cofactor. Requires L-ascorbate as cofactor.

The sequence is that of PKHD-type hydroxylase xcc-b100_1388 from Xanthomonas campestris pv. campestris (strain B100).